The following is an 802-amino-acid chain: Homeobox-leucine zipper protein ANTHOCYANINLESS 2 (802 aa).

Residues 71–143 (QPERGTNRGE…RKKRYHRHTP (73 aa)) form a disordered region. Residues 103–113 (RSREEEHESRS) are compositionally biased toward basic and acidic residues. Residues 133–142 (PRKKRYHRHT) are compositionally biased toward basic residues. A DNA-binding region (homeobox) is located at residues 134–193 (RKKRYHRHTPQQIQELESMFKECPHPDEKQRLELSKRLCLETRQVKFWFQNRRTQMKTQL). Positions 182–221 (FQNRRTQMKTQLERHENALLRQENDKLRAENMSIREAMRN) form a coiled coil. In terms of domain architecture, START spans 315-546 (GIDQKSVLLE…LQRQCECLAI (232 aa)).

Belongs to the HD-ZIP homeobox family. Class IV subfamily. As to quaternary structure, interacts with AIL7/PLT7, ANT, BBM and AIL1. Expressed in roots, stems, leaves and floral buds.

The protein resides in the nucleus. Functionally, probable transcription factor involved in the regulation of the tissue-specific accumulation of anthocyanins and in cellular organization of the primary root. The sequence is that of Homeobox-leucine zipper protein ANTHOCYANINLESS 2 from Arabidopsis thaliana (Mouse-ear cress).